Here is a 137-residue protein sequence, read N- to C-terminus: Large ribosomal subunit protein uL14A (137 aa).

Ser-2 is modified (N-acetylserine). An N6,N6-dimethyllysine; by RKM1 mark is found at Lys-106 and Lys-110.

Belongs to the universal ribosomal protein uL14 family. Component of the large ribosomal subunit (LSU). Mature yeast ribosomes consist of a small (40S) and a large (60S) subunit. The 40S small subunit contains 1 molecule of ribosomal RNA (18S rRNA) and 33 different proteins (encoded by 57 genes). The large 60S subunit contains 3 rRNA molecules (25S, 5.8S and 5S rRNA) and 46 different proteins (encoded by 81 genes). In terms of processing, methylated by RKM1 at 2 different sites, but it is unclear which are the 2 methylated residues among Lys-40, Lys-106 and/or Lys-110.

It localises to the cytoplasm. Its function is as follows. Component of the ribosome, a large ribonucleoprotein complex responsible for the synthesis of proteins in the cell. The small ribosomal subunit (SSU) binds messenger RNAs (mRNAs) and translates the encoded message by selecting cognate aminoacyl-transfer RNA (tRNA) molecules. The large subunit (LSU) contains the ribosomal catalytic site termed the peptidyl transferase center (PTC), which catalyzes the formation of peptide bonds, thereby polymerizing the amino acids delivered by tRNAs into a polypeptide chain. The nascent polypeptides leave the ribosome through a tunnel in the LSU and interact with protein factors that function in enzymatic processing, targeting, and the membrane insertion of nascent chains at the exit of the ribosomal tunnel. In Saccharomyces cerevisiae (strain ATCC 204508 / S288c) (Baker's yeast), this protein is Large ribosomal subunit protein uL14A.